The chain runs to 901 residues: Protein translocase subunit SecA (901 aa).

Residues glutamine 85, 103–107 (GEGKT), and aspartate 492 each bind ATP. Residues 828–901 (GLVTDDGGNP…PKNRRNKKRR (74 aa)) are disordered. Over residues 871–881 (DGQKPRGEGNR) the composition is skewed to basic and acidic residues. Positions 882-901 (AARRSAASKKPKNRRNKKRR) are enriched in basic residues.

Belongs to the SecA family. As to quaternary structure, monomer and homodimer. Part of the essential Sec protein translocation apparatus which comprises SecA, SecYEG and auxiliary proteins SecDF. Other proteins may also be involved.

It is found in the cell membrane. Its subcellular location is the cytoplasm. It catalyses the reaction ATP + H2O + cellular proteinSide 1 = ADP + phosphate + cellular proteinSide 2.. In terms of biological role, part of the Sec protein translocase complex. Interacts with the SecYEG preprotein conducting channel. Has a central role in coupling the hydrolysis of ATP to the transfer of proteins into and across the cell membrane, serving as an ATP-driven molecular motor driving the stepwise translocation of polypeptide chains across the membrane. In Cutibacterium acnes (strain DSM 16379 / KPA171202) (Propionibacterium acnes), this protein is Protein translocase subunit SecA.